A 366-amino-acid polypeptide reads, in one-letter code: Ferredoxin--NADP reductase, leaf isozyme 2, chloroplastic (366 aa).

Residues 1 to 48 (MAAVNTVSSLPCSKAGAAVAGGAPRPSTCSVFYPPRCWSKRSSGNGVR) constitute a chloroplast transit peptide. The region spanning 87–209 (KEPYTGRCLL…TGPVGKEMLM (123 aa)) is the FAD-binding FR-type domain. FAD contacts are provided by residues 145-148 (RLYS), 166-168 (CVK), Tyr172, and 183-185 (VCS). The NADP(+) site is built by Ser148 and Lys168. Cys184 and Cys189 are oxidised to a cystine. Residue Ser185 is modified to Phosphoserine. The residue at position 216 (Thr216) is a Phosphothreonine. Thr224 contributes to the FAD binding site. NADP(+) is bound by residues Thr224, 256-257 (VP), 286-287 (SR), Lys296, 325-326 (GL), and Glu364.

This sequence belongs to the ferredoxin--NADP reductase type 1 family. Heterodimer with LFNR1. Component of high molecular weight thylakoid LFNRs-containing protein complexes containing LIR1, LFNR1, LFNR2, TIC62 and TROL proteins. Interacts directly with LFNR1 and LFNR2; LIR1 increases the affinity of LFNR1 and LFNR2 for TIC62 and subsequent thylakoid relocalization. The cofactor is FAD. Post-translationally, may form interchain disulfide bonds with LIR1.

It localises to the plastid. It is found in the chloroplast stroma. The protein localises to the chloroplast thylakoid membrane. It carries out the reaction 2 reduced [2Fe-2S]-[ferredoxin] + NADP(+) + H(+) = 2 oxidized [2Fe-2S]-[ferredoxin] + NADPH. It functions in the pathway energy metabolism; photosynthesis. Its function is as follows. Plays a key role in regulating the relative amounts of cyclic and non-cyclic electron flow to meet the demands of the plant for ATP and reducing power. The sequence is that of Ferredoxin--NADP reductase, leaf isozyme 2, chloroplastic from Oryza sativa subsp. indica (Rice).